The sequence spans 442 residues: UDP-N-acetylmuramoylalanine--D-glutamate ligase (442 aa).

ATP is bound at residue 113–119 (GSNGKTT).

The protein belongs to the MurCDEF family.

The protein localises to the cytoplasm. The enzyme catalyses UDP-N-acetyl-alpha-D-muramoyl-L-alanine + D-glutamate + ATP = UDP-N-acetyl-alpha-D-muramoyl-L-alanyl-D-glutamate + ADP + phosphate + H(+). The protein operates within cell wall biogenesis; peptidoglycan biosynthesis. Its function is as follows. Cell wall formation. Catalyzes the addition of glutamate to the nucleotide precursor UDP-N-acetylmuramoyl-L-alanine (UMA). This Coxiella burnetii (strain CbuG_Q212) (Coxiella burnetii (strain Q212)) protein is UDP-N-acetylmuramoylalanine--D-glutamate ligase.